We begin with the raw amino-acid sequence, 176 residues long: MNEVVAKKYVKAILSDVKSNELNAFVENLSELAAAFASDKFKSIISLPTLKASQKVEFVLSLVKNQDAKFANFIKLLGANKRLELIPAILDEMKIEQSLLENTYRGEVVGNFDLSAEQLKALEENFSKKFNSKIKLDGSKSDYNGVKVELDDLGVEVNFSIDRLKSQMSEYILKAI.

Belongs to the ATPase delta chain family. In terms of assembly, F-type ATPases have 2 components, F(1) - the catalytic core - and F(0) - the membrane proton channel. F(1) has five subunits: alpha(3), beta(3), gamma(1), delta(1), epsilon(1). F(0) has three main subunits: a(1), b(2) and c(10-14). The alpha and beta chains form an alternating ring which encloses part of the gamma chain. F(1) is attached to F(0) by a central stalk formed by the gamma and epsilon chains, while a peripheral stalk is formed by the delta and b chains.

It is found in the cell inner membrane. In terms of biological role, f(1)F(0) ATP synthase produces ATP from ADP in the presence of a proton or sodium gradient. F-type ATPases consist of two structural domains, F(1) containing the extramembraneous catalytic core and F(0) containing the membrane proton channel, linked together by a central stalk and a peripheral stalk. During catalysis, ATP synthesis in the catalytic domain of F(1) is coupled via a rotary mechanism of the central stalk subunits to proton translocation. Functionally, this protein is part of the stalk that links CF(0) to CF(1). It either transmits conformational changes from CF(0) to CF(1) or is implicated in proton conduction. In Campylobacter concisus (strain 13826), this protein is ATP synthase subunit delta.